A 275-amino-acid chain; its full sequence is Phosphonoacetaldehyde hydrolase (275 aa).

The active-site Nucleophile is Asp15. The Mg(2+) site is built by Asp15 and Ala17. The active-site Schiff-base intermediate with substrate is the Lys56. Mg(2+) is bound at residue Asp189.

The protein belongs to the HAD-like hydrolase superfamily. PhnX family. As to quaternary structure, homodimer. Requires Mg(2+) as cofactor.

It catalyses the reaction phosphonoacetaldehyde + H2O = acetaldehyde + phosphate + H(+). In terms of biological role, involved in phosphonate degradation. This is Phosphonoacetaldehyde hydrolase from Pseudomonas fluorescens (strain SBW25).